We begin with the raw amino-acid sequence, 363 residues long: Putative serine/threonine-protein kinase gskl-1 (363 aa).

The 285-residue stretch at 20 to 304 (FGAHKLCGSG…AIDVLKMPLF (285 aa)) folds into the Protein kinase domain. Residues 26-34 (CGSGRFSNV) and lysine 50 contribute to the ATP site. Aspartate 146 functions as the Proton acceptor in the catalytic mechanism. The tract at residues 311–363 (PPKKRSNGVEMPNLASYTEMHHKREPETEVVADIQTTEKAEKESDSTNEELED) is disordered. Residues 346-355 (TTEKAEKESD) show a composition bias toward basic and acidic residues.

It belongs to the protein kinase superfamily. Ser/Thr protein kinase family. In terms of tissue distribution, expressed during multiple stages of spermatogenesis, in males and hermaphrodites (at protein level).

It is found in the cytoplasm. Its subcellular location is the cell projection. The protein resides in the pseudopodium. The enzyme catalyses L-seryl-[protein] + ATP = O-phospho-L-seryl-[protein] + ADP + H(+). It carries out the reaction L-threonyl-[protein] + ATP = O-phospho-L-threonyl-[protein] + ADP + H(+). Its function is as follows. May be an autophosphorylating tyrosine kinase, a bifunctional (serine/tyrosine-specific) protein kinase, or a serine kinase that is a substrate for an associated tyrosine kinase. Acting in concert with putative serine/threonine-protein kinase gskl-2, required for sister chromatid segregation and spermatid budding during male meiosis. Plays a role in regulating female meiosis II, together with gskl-2. Involved in sperm pseudopod formation and function, together with gskl-2. The chain is Putative serine/threonine-protein kinase gskl-1 from Caenorhabditis elegans.